The following is a 280-amino-acid chain: Fructose-1,6-bisphosphatase class 1 (280 aa).

Residues Glu64, Asp83, Leu85, and Asp86 each coordinate Mg(2+). Substrate is bound by residues 86 to 89 (DGSS), Tyr189, and Lys220. Glu226 provides a ligand contact to Mg(2+).

Belongs to the FBPase class 1 family. As to quaternary structure, homotetramer. The cofactor is Mg(2+).

The protein localises to the cytoplasm. The enzyme catalyses beta-D-fructose 1,6-bisphosphate + H2O = beta-D-fructose 6-phosphate + phosphate. It functions in the pathway carbohydrate biosynthesis; gluconeogenesis. This chain is Fructose-1,6-bisphosphatase class 1, found in Campylobacter jejuni subsp. jejuni serotype O:23/36 (strain 81-176).